Consider the following 184-residue polypeptide: Translation initiation factor IF-3 (184 aa).

It belongs to the IF-3 family. In terms of assembly, monomer.

The protein localises to the cytoplasm. In terms of biological role, IF-3 binds to the 30S ribosomal subunit and shifts the equilibrium between 70S ribosomes and their 50S and 30S subunits in favor of the free subunits, thus enhancing the availability of 30S subunits on which protein synthesis initiation begins. The polypeptide is Translation initiation factor IF-3 (Hamiltonella defensa subsp. Acyrthosiphon pisum (strain 5AT)).